We begin with the raw amino-acid sequence, 953 residues long: Atromentin synthetase invA5 (953 aa).

The adenylation (A) domain stretch occupies residues 37-460 (SRAVSQYPDH…SGRIKDTVIV (424 aa)). Residues 592 to 670 (APSTETEKTL…SLAKYVDSLI (79 aa)) form the Carrier domain. Residues 597-667 (TEKTLAGIYA…VISSLAKYVD (71 aa)) form a thiolation and peptide carrier (T) domain region. The residue at position 629 (Ser629) is an O-(pantetheine 4'-phosphoryl)serine. Positions 693–795 (PIFMVHPGVG…FTGLINIPPN (103 aa)) are thioesterase (TE) domain.

Belongs to the ATP-dependent AMP-binding enzyme family.

The protein operates within secondary metabolite biosynthesis. In terms of biological role, an L-tyrosine:2-oxoglutarate aminotransferase (probably invD) and atromentin synthetase invA5 catalyze consecutive steps to turn over L-tyrosine into atromentin, which represents the generic precursor molecule for the entire terphenylquinone and pulvinic acid family of pigments, which are widely distributed secondary metabolites in homobasidiomycetes. The first step catalyzed by the aminotransferase converts L-tyrosine in to 4-hydroxyphenylpyruvate (4-HPP). Adenylation of two 4-HPP monomers by the invA5 adenylation (A) domain, covalent tethering of the monomers as a thioester and oxoester onto the invA5 thiolation (T) and thioesterase (TE) domains, respectively, and symmetric C-C-bond formation between two monomers catalyzed by the invA5 TE domain leads to atromentin. In Paxillus involutus (Naked brimcap), this protein is Atromentin synthetase invA5 (invA5).